The primary structure comprises 359 residues: ATP-dependent (S)-NAD(P)H-hydrate dehydratase (359 aa).

Residues 61–350 (LLEEARKVVP…SEINSVFVNN (290 aa)) form the YjeF C-terminal domain. (6S)-NADPHX contacts are provided by residues Gly161 and 214-220 (NVVEFQR). ATP is bound by residues 256 to 260 (KGEVD) and 275 to 284 (GSPRRCGGQG). (6S)-NADPHX is bound at residue Asp285.

The protein belongs to the NnrD/CARKD family. Mg(2+) serves as cofactor.

It catalyses the reaction (6S)-NADHX + ATP = ADP + phosphate + NADH + H(+). It carries out the reaction (6S)-NADPHX + ATP = ADP + phosphate + NADPH + H(+). Catalyzes the dehydration of the S-form of NAD(P)HX at the expense of ATP, which is converted to ADP. Together with NAD(P)HX epimerase, which catalyzes the epimerization of the S- and R-forms, the enzyme allows the repair of both epimers of NAD(P)HX, a damaged form of NAD(P)H that is a result of enzymatic or heat-dependent hydration. This chain is ATP-dependent (S)-NAD(P)H-hydrate dehydratase, found in Ciona intestinalis (Transparent sea squirt).